Reading from the N-terminus, the 92-residue chain is UPF0250 protein VV0902 (92 aa).

It belongs to the UPF0250 family.

The sequence is that of UPF0250 protein VV0902 from Vibrio vulnificus (strain YJ016).